The primary structure comprises 298 residues: MNHIQEAFLNTLKVERNFSEHTLKSYQDDLIQFNQFLEQEHLQLKTFEYRDARNYLSYLYSNHLKRTSVSRKISTLRTFYEYWMTLDENIINPFVQLVHPKKEKYLPQFFYEEEMEALFKTVEEDTSKNLRDRVILELLYATGIRVSELVNIKKQDIDFYANGVTVLGKGSKERFVPFGAYCRQSIENYLEHFKPIQSCNHDFLILNMKGEAITERGVRYVLNDIVKRTAGVSEIHPHKLRHTFATHLLNQGADLRTVQSLLGHVNLSTTGKYTHVSNQQLRKVYLNAHPRAKKENET.

One can recognise a Core-binding (CB) domain in the interval 1–84 (MNHIQEAFLN…TLRTFYEYWM (84 aa)). One can recognise a Tyr recombinase domain in the interval 105–286 (YLPQFFYEEE…SNQQLRKVYL (182 aa)). Catalysis depends on residues arginine 145, lysine 169, histidine 238, arginine 241, and histidine 264. The active-site O-(3'-phospho-DNA)-tyrosine intermediate is tyrosine 273.

The protein belongs to the 'phage' integrase family. XerC subfamily. Forms a cyclic heterotetrameric complex composed of two molecules of XerC and two molecules of XerD.

The protein resides in the cytoplasm. Its function is as follows. Site-specific tyrosine recombinase, which acts by catalyzing the cutting and rejoining of the recombining DNA molecules. The XerC-XerD complex is essential to convert dimers of the bacterial chromosome into monomers to permit their segregation at cell division. It also contributes to the segregational stability of plasmids. In Staphylococcus aureus (strain Mu3 / ATCC 700698), this protein is Tyrosine recombinase XerC.